The chain runs to 574 residues: Interactor of HORMAD1 protein 1 (574 aa).

Residues 113–133 (GLSKQFEEKKRRATDQSDSET) are disordered. Over residues 117 to 127 (QFEEKKRRATD) the composition is skewed to basic and acidic residues. Residues 217–240 (MEMKSTLKNLEVLVVEQTKNLQQF) adopt a coiled-coil conformation. Disordered regions lie at residues 267–324 (GHLK…GVWD), 372–393 (FSNL…GASQ), and 426–457 (TEQK…DRKQ). Residues 272-284 (STSQTSPSLTQSL) are compositionally biased toward low complexity. A compositionally biased stretch (polar residues) spans 372-381 (FSNLPSQRAG). Basic residues predominate over residues 431-449 (RPCRKRRRGKKQQPQRSKR). Residues S476, S569, and S570 each carry the phosphoserine modification.

As to quaternary structure, part of the MCD recombinosome complex, at least composed of IHO1, REC114 and MEI4. Interacts with REC114. Interacts with MEI4. Interacts with HORMAD1. Interacts with ANKRD31. As to expression, detected in spermatocytes and testis (at protein level).

The protein resides in the chromosome. In terms of biological role, required for DNA double-strand breaks (DSBs) formation in unsynapsed regions during meiotic recombination. Probably acts by forming a complex with MEI4 and REC114, which activates DSBs formation in unsynapsed regions, an essential step to ensure completion of synapsis. Not required for HORMAD1 functions in pairing-independent synaptonemal complex formation, ATR recruitment to unsynapsed axes, meiotic silencing of unsynapsed chromatin (MSUC) or meiotic surveillance. This Mus musculus (Mouse) protein is Interactor of HORMAD1 protein 1.